The chain runs to 131 residues: DNA-binding protein inhibitor ID-4 (131 aa).

Residues 36 to 88 enclose the bHLH domain; the sequence is ARYKMEEEETLCLQYDMNDCYSRLKRLVPTIPPNKKVSKVEILQHVIDYILDL.

Heterodimer with other HLH proteins. As to expression, during embryonic development, expressed in a number of neural tissues, including Rohon-Beard neurons, olfactory placode, eye primordia, and the trigeminal ganglia. Also expressed in other organs including the pronephros and liver primordium. Pronephric development begins by stage 25 and increases during tailbud stages. Expressed in both the tubules and the duct. As embryogenesis progresses, expressed in the migrating melanocytes and lateral line structures.

It is found in the nucleus. Transcriptional regulator (lacking a basic DNA binding domain) which negatively regulates the basic helix-loop-helix (bHLH) transcription factors by forming heterodimers and inhibiting their DNA binding and transcriptional activity. Inhibits the activity of both neurogenic (neurog1/neurogenin, neurod1/neuroD) and myogenic (myod1/myoD) bHLH factors. This Xenopus laevis (African clawed frog) protein is DNA-binding protein inhibitor ID-4.